The primary structure comprises 217 residues: Fin bud initiation factor homolog (217 aa).

A signal peptide spans 1–18 (MVFPKLIWMGFFCHLCRG). N-linked (GlcNAc...) asparagine glycosylation occurs at asparagine 30.

Belongs to the FIBIN family. Homodimer; disulfide-linked. Seems to also exist as monomers.

The protein localises to the secreted. It localises to the golgi apparatus. It is found in the endoplasmic reticulum. This is Fin bud initiation factor homolog (Fibin) from Mus musculus (Mouse).